A 288-amino-acid polypeptide reads, in one-letter code: Fructose-bisphosphate aldolase (288 aa).

S49 provides a ligand contact to D-glyceraldehyde 3-phosphate. D84 serves as the catalytic Proton donor. Zn(2+)-binding residues include H85, D105, E135, and H177. Position 178 (G178) interacts with dihydroxyacetone phosphate. H206 lines the Zn(2+) pocket. Residues 207 to 209 and 228 to 231 contribute to the dihydroxyacetone phosphate site; these read GGS and NINT.

It belongs to the class II fructose-bisphosphate aldolase family. As to quaternary structure, homodimer. It depends on Zn(2+) as a cofactor.

The catalysed reaction is beta-D-fructose 1,6-bisphosphate = D-glyceraldehyde 3-phosphate + dihydroxyacetone phosphate. Its pathway is carbohydrate degradation; glycolysis; D-glyceraldehyde 3-phosphate and glycerone phosphate from D-glucose: step 4/4. Functionally, catalyzes the aldol condensation of dihydroxyacetone phosphate (DHAP or glycerone-phosphate) with glyceraldehyde 3-phosphate (G3P) to form fructose 1,6-bisphosphate (FBP) in gluconeogenesis and the reverse reaction in glycolysis. The sequence is that of Fructose-bisphosphate aldolase (fba) from Mycoplasma pneumoniae (strain ATCC 29342 / M129 / Subtype 1) (Mycoplasmoides pneumoniae).